Here is a 491-residue protein sequence, read N- to C-terminus: Phosphatidylglycerol--prolipoprotein diacylglyceryl transferase (491 aa).

3 helical membrane passes run 24–44 (IPLRAYALCIILGIVVAIWWG), 58–78 (VLDVAMFAVPFGLIGGRAYHV), and 98–118 (IWQGGLGIWGAVFLGGIGAWI). A 1,2-diacyl-sn-glycero-3-phospho-(1'-sn-glycerol) is bound at residue Arg146. 2 consecutive transmembrane segments (helical) span residues 192–212 (IVHPTFLYELLWNVLVVIALV) and 256–276 (INNFTSALVFLAAIAYFVFAT). Residues 309–323 (NGPAEPGATASTATD) are compositionally biased toward low complexity. A disordered region spans residues 309–491 (NGPAEPGATA…DRVDSGENDA (183 aa)). The span at 347–360 (KGDRGTADAADTAK) shows a compositional bias: basic and acidic residues. Low complexity-rich tracts occupy residues 361–387 (DASATDSASNSASATDSDFGETAGSSD), 394–406 (AVKAASGATAAEK), and 415–438 (AGEAAADTSAADQPAADKSGSAKS). The segment covering 453-462 (NESESTRDNE) has biased composition (basic and acidic residues). The span at 463 to 481 (STSAGTAASATGSAGAGAT) shows a compositional bias: low complexity. Basic and acidic residues predominate over residues 482–491 (DRVDSGENDA).

It belongs to the Lgt family.

The protein localises to the cell membrane. It catalyses the reaction L-cysteinyl-[prolipoprotein] + a 1,2-diacyl-sn-glycero-3-phospho-(1'-sn-glycerol) = an S-1,2-diacyl-sn-glyceryl-L-cysteinyl-[prolipoprotein] + sn-glycerol 1-phosphate + H(+). It functions in the pathway protein modification; lipoprotein biosynthesis (diacylglyceryl transfer). Functionally, catalyzes the transfer of the diacylglyceryl group from phosphatidylglycerol to the sulfhydryl group of the N-terminal cysteine of a prolipoprotein, the first step in the formation of mature lipoproteins. In Nocardia farcinica (strain IFM 10152), this protein is Phosphatidylglycerol--prolipoprotein diacylglyceryl transferase.